Consider the following 396-residue polypeptide: MSKLNAYFGEYGGQFVPQILVPALDQLEQEFIKAQADESFKQEFKELLQEYAGRPTALTKTRNIVKNTRTKLYLKREDLLHGGAHKTNQVLGQALLAKRMGKKEIIAETGAGQHGVATALACALLDLKCRVYMGAKDVERQSPNVFRMKLMGAEVIPVHSGSATLKDACNEALRDWSANYSKAHYLLGTAAGPHPFPTIVREFQRMIGEETKQQMLAKEGRLPDAVIACVGGGSNAIGMFADFIDEKNVKLIGVEPAGKGIETGEHGAPLKHGKTGIFFGMKAPLMQNSDGQIEESYSISAGLDFPSVGPQHAHLLAIGRAKYASATDDEALDAFKLLCKKEGIIPALESSHALAHALKLAYEDPNKEQLLVVNLSGRGDKDIFTVHDILKEKGEI.

Lys86 is modified (N6-(pyridoxal phosphate)lysine).

This sequence belongs to the TrpB family. As to quaternary structure, tetramer of two alpha and two beta chains. Pyridoxal 5'-phosphate serves as cofactor.

It catalyses the reaction (1S,2R)-1-C-(indol-3-yl)glycerol 3-phosphate + L-serine = D-glyceraldehyde 3-phosphate + L-tryptophan + H2O. It functions in the pathway amino-acid biosynthesis; L-tryptophan biosynthesis; L-tryptophan from chorismate: step 5/5. Functionally, the beta subunit is responsible for the synthesis of L-tryptophan from indole and L-serine. This is Tryptophan synthase beta chain from Francisella tularensis subsp. tularensis (strain FSC 198).